The sequence spans 142 residues: Small ribosomal subunit protein bS18c (142 aa).

The segment at 1–21 (MDRITGPFRKSKKSFRKPLPP) is disordered.

The protein belongs to the bacterial ribosomal protein bS18 family. Part of the 30S ribosomal subunit.

Its subcellular location is the plastid. This Cuscuta gronovii (Common dodder) protein is Small ribosomal subunit protein bS18c.